The chain runs to 202 residues: Chromophore lyase CpcT/CpeT 2 (202 aa).

It belongs to the CpcT/CpeT biliprotein lyase family.

Covalently attaches a chromophore to Cys residue(s) of phycobiliproteins. In Gloeobacter violaceus (strain ATCC 29082 / PCC 7421), this protein is Chromophore lyase CpcT/CpeT 2.